A 259-amino-acid polypeptide reads, in one-letter code: Undecaprenyl-diphosphatase 4 (259 aa).

The next 8 membrane-spanning stretches (helical) occupy residues 1 to 21 (MNWL…FLPI), 39 to 59 (AGLF…FIYY), 71 to 91 (FSKL…IGLL), 99 to 119 (ISKT…FLYV), 133 to 153 (ITYK…FPAI), 173 to 193 (AAYF…ILQF), 208 to 228 (SLIV…SWMI), and 239 to 259 (FAYY…TDVF).

The protein belongs to the UppP family.

The protein resides in the cell membrane. The enzyme catalyses di-trans,octa-cis-undecaprenyl diphosphate + H2O = di-trans,octa-cis-undecaprenyl phosphate + phosphate + H(+). Functionally, catalyzes the dephosphorylation of undecaprenyl diphosphate (UPP). Confers resistance to bacitracin. The polypeptide is Undecaprenyl-diphosphatase 4 (Bacillus thuringiensis subsp. konkukian (strain 97-27)).